A 957-amino-acid chain; its full sequence is Plasma membrane ATPase 1 (957 aa).

The Cytoplasmic segment spans residues Met-1 to Phe-66. A helical transmembrane segment spans residues Leu-67–Ile-86. The Extracellular segment spans residues Ala-87–Trp-98. Residues Gln-99–Glu-119 form a helical membrane-spanning segment. The Cytoplasmic portion of the chain corresponds to Asn-120–Ile-248. A helical transmembrane segment spans residues Gly-249–Pro-269. At Ile-270–Ile-279 the chain is on the extracellular side. Residues Asp-280–Thr-301 form a helical membrane-spanning segment. Over Met-302–Lys-648 the chain is Cytoplasmic. Asp-334 serves as the catalytic 4-aspartylphosphate intermediate. Mg(2+) contacts are provided by Asp-593 and Asp-597. The chain crosses the membrane as a helical span at residues Asn-649–Leu-670. Over Ile-671–Asp-675 the chain is Extracellular. The chain crosses the membrane as a helical span at residues Phe-676 to Asp-698. Residues Arg-699–Ile-714 lie on the Cytoplasmic side of the membrane. The chain crosses the membrane as a helical span at residues Phe-715–Ala-735. Topologically, residues Ala-736 to Arg-760 are extracellular. A helical membrane pass occupies residues Lys-761–Thr-781. Over Arg-782–Gly-793 the chain is Cytoplasmic. Residues Phe-794–Ala-814 traverse the membrane as a helical segment. Residues Asn-815 to Gly-823 are Extracellular-facing. A helical membrane pass occupies residues Ile-824–Asp-844. The Cytoplasmic portion of the chain corresponds to Ile-845–Val-957.

It belongs to the cation transport ATPase (P-type) (TC 3.A.3) family. Type IIIA subfamily. As to expression, expressed in roots, stems, leaves from both vegetative and flowering plants, and flowers at early and late stages of development with highest expression levels found in flowers and stem.

It localises to the cell membrane. It catalyses the reaction ATP + H2O + H(+)(in) = ADP + phosphate + 2 H(+)(out). Functionally, the plasma membrane ATPase of plants and fungi is a hydrogen ion pump. The proton gradient it generates drives the active transport of nutrients by H(+)-symport. The resulting external acidification and/or internal alkinization may mediate growth responses. The chain is Plasma membrane ATPase 1 (PMA1) from Nicotiana plumbaginifolia (Leadwort-leaved tobacco).